Here is a 747-residue protein sequence, read N- to C-terminus: H(+)/Cl(-) exchange transporter 4 (747 aa).

A required for localization in the endoplasmic reticulum region spans residues 1–50 (MDFLDEPFPDVGTYEDFHTIDWLREKSRDTDRHRKITSKSKESIWEFIKS). At 1 to 54 (MDFLDEPFPDVGTYEDFHTIDWLREKSRDTDRHRKITSKSKESIWEFIKSLLDA) the chain is on the cytoplasmic side. 2 helical membrane-spanning segments follow: residues 55 to 92 (WSGW…VCLS) and 138 to 161 (LNYL…VRVF). A Selectivity filter part_1 motif is present at residues 167 to 171 (GSGIP). Residue Ser-168 participates in chloride binding. The helical intramembrane region spans 170–177 (IPEIKTIL). Transmembrane regions (helical) follow at residues 187 to 205 (GKWT…VSSG) and 211 to 230 (EGPL…SLFS). A Selectivity filter part_2 motif is present at residues 209–213 (GKEGP). 2 consecutive intramembrane regions (helical) follow at residues 242 to 254 (VLSA…VSVA) and 258 to 266 (PIGGVLFSL). 5 helical membrane passes run 278 to 296 (LWRS…RSIN), 320 to 345 (FPFI…AWCR), 352 to 372 (LGKY…IIAY), 429 to 449 (MWQL…TFGM), and 454 to 473 (GLFI…VGIG). The Selectivity filter part_3 signature appears at 454 to 458 (GLFIP). Phe-456 contributes to the chloride binding site. 2 intramembrane regions (helical) span residues 501-515 (GLYA…LGGV) and 519-530 (TVSLVVIMFELT). The segment at residues 531–534 (GGLE) is an intramembrane region (note=Loop between two helices). A helical transmembrane segment spans residues 535-553 (YIVPLMAAAVTSKWVADAF). Over 554–747 (GKEGIYEAHI…NQDPESIIFN (194 aa)) the chain is Cytoplasmic. Residue Tyr-559 coordinates chloride. The CBS 1 domain maps to 587–653 (MRPRRGEPPL…AIKNARQRQE (67 aa)). Residues Ser-597 and 618 to 620 (YNG) contribute to the ATP site. The interval 654–683 (GIVSNSIMYFTEEPPELPANSPHPLKLRRI) is required for localization in the endoplasmic reticulum. In terms of domain architecture, CBS 2 spans 684–742 (LNLSPFTVTDHTPMETVVDIFRKLGLRQCLVTRSGRLLGIITKKDVLRHMAQMANQDPE). 725–728 (TKKD) contributes to the ATP binding site.

The protein belongs to the chloride channel (TC 2.A.49) family. ClC-4/CLCN4 subfamily. Strongly expressed in liver and brain, but also in heart, muscle, kidney and spleen.

It localises to the early endosome membrane. The protein localises to the late endosome membrane. Its subcellular location is the endoplasmic reticulum membrane. The protein resides in the lysosome membrane. It is found in the recycling endosome membrane. In terms of biological role, strongly outwardly rectifying, electrogenic H(+)/Cl(-)exchanger which mediates the exchange of chloride ions against protons. The CLC channel family contains both chloride channels and proton-coupled anion transporters that exchange chloride or another anion for protons. The presence of conserved gating glutamate residues is typical for family members that function as antiporters. This chain is H(+)/Cl(-) exchange transporter 4 (Clcn4), found in Rattus norvegicus (Rat).